Reading from the N-terminus, the 484-residue chain is MAKAPTTKNVGRISQVIGAVVDVSFDGSLPAILNALETTNNGNRLVLEVAQHLGEGTVRTIAMDATDGLTRGQEVTDTGSQIRVPVGPQTLGRILNVIGEPIDERGPVNATQTSPIHAEAPLFVDQSTDASILVTGIKVIDLLAPYAKGGKIGLFGGAGVGKTVLIQELINNIAKGHGGTSVFAGVGERTREGNDLYHEFLDAGVIAKDADGNPTPEGSKVALVFGQMNEPPGARARVALSGLTIAEYFRDVEGQDVLFFVDNIFRFTQAGSEVSALLGRIPSAVGYQPTLSTDMGALQERITSTNKGSITSVQAIYVPADDLTDPAPATSFAHLDATTNLNRAISELGIYPAVDPLDSTSRMLEPRIVGQEHYETARAVQETLQKYKSLQDIIAILGMDELSEEDKLTVQRARKIQRFLSQPFHVAEVFTGIAGKFVAIEDTVKSFKAVVEGEYDHLPEAAFYMVGGIDEVVEKAKKLAAEAA.

Residue 156-163 (GGAGVGKT) coordinates ATP.

Belongs to the ATPase alpha/beta chains family. F-type ATPases have 2 components, CF(1) - the catalytic core - and CF(0) - the membrane proton channel. CF(1) has five subunits: alpha(3), beta(3), gamma(1), delta(1), epsilon(1). CF(0) has three main subunits: a(1), b(2) and c(9-12). The alpha and beta chains form an alternating ring which encloses part of the gamma chain. CF(1) is attached to CF(0) by a central stalk formed by the gamma and epsilon chains, while a peripheral stalk is formed by the delta and b chains.

The protein localises to the cell inner membrane. It catalyses the reaction ATP + H2O + 4 H(+)(in) = ADP + phosphate + 5 H(+)(out). In terms of biological role, produces ATP from ADP in the presence of a proton gradient across the membrane. The catalytic sites are hosted primarily by the beta subunits. This Rhizorhabdus wittichii (strain DSM 6014 / CCUG 31198 / JCM 15750 / NBRC 105917 / EY 4224 / RW1) (Sphingomonas wittichii) protein is ATP synthase subunit beta.